The primary structure comprises 246 residues: 1-(5-phosphoribosyl)-5-[(5-phosphoribosylamino)methylideneamino] imidazole-4-carboxamide isomerase (246 aa).

The Proton acceptor role is filled by D8. The Proton donor role is filled by D130.

The protein belongs to the HisA/HisF family.

It is found in the cytoplasm. It catalyses the reaction 1-(5-phospho-beta-D-ribosyl)-5-[(5-phospho-beta-D-ribosylamino)methylideneamino]imidazole-4-carboxamide = 5-[(5-phospho-1-deoxy-D-ribulos-1-ylimino)methylamino]-1-(5-phospho-beta-D-ribosyl)imidazole-4-carboxamide. It functions in the pathway amino-acid biosynthesis; L-histidine biosynthesis; L-histidine from 5-phospho-alpha-D-ribose 1-diphosphate: step 4/9. This chain is 1-(5-phosphoribosyl)-5-[(5-phosphoribosylamino)methylideneamino] imidazole-4-carboxamide isomerase, found in Shigella dysenteriae serotype 1 (strain Sd197).